The sequence spans 124 residues: Outer dense fiber protein 2 (124 aa).

Positions 13–124 form a coiled coil; sequence KEDSERLMEQ…EAIMEQLKEL (112 aa).

Belongs to the ODF2 family. As to quaternary structure, self-associates. Associates with microtubules and forms a fibrillar structure partially linked to the microtubule network. Interacts through its C-terminus with PLK1. Interacts with ODF1. Interacts with MARK4; the interaction is required for localization of ODF2 to centrioles. Interacts with TSSK4. Interacts with AKNA. Interacts with QRICH2. Interacts with CFAP58. Interacts with BBOF1. Interacts with CCDC38. Interacts with CCDC42. Post-translationally, tyrosine phosphorylated. As to expression, detected in sperm flagella (at protein level).

It localises to the cytoplasm. Its subcellular location is the cytoskeleton. It is found in the microtubule organizing center. The protein localises to the centrosome. The protein resides in the cell projection. It localises to the cilium. Its subcellular location is the centriole. It is found in the spindle pole. The protein localises to the flagellum. Functionally, seems to be a major component of sperm tail outer dense fibers (ODF). ODFs are filamentous structures located on the outside of the axoneme in the midpiece and principal piece of the mammalian sperm tail and may help to maintain the passive elastic structures and elastic recoil of the sperm tail. May have a modulating influence on sperm motility. Functions as a general scaffold protein that is specifically localized at the distal/subdistal appendages of mother centrioles. Component of the centrosome matrix required for the localization of PLK1 and NIN to the centrosomes. Required for the formation and/or maintenance of normal CETN1 assembly. In Mesocricetus auratus (Golden hamster), this protein is Outer dense fiber protein 2.